A 262-amino-acid polypeptide reads, in one-letter code: Thiazole synthase (262 aa).

The Schiff-base intermediate with DXP role is filled by K104. 1-deoxy-D-xylulose 5-phosphate contacts are provided by residues G165, 191–192 (AG), and 213–214 (NT).

This sequence belongs to the ThiG family. Homotetramer. Forms heterodimers with either ThiH or ThiS.

The protein localises to the cytoplasm. The enzyme catalyses [ThiS sulfur-carrier protein]-C-terminal-Gly-aminoethanethioate + 2-iminoacetate + 1-deoxy-D-xylulose 5-phosphate = [ThiS sulfur-carrier protein]-C-terminal Gly-Gly + 2-[(2R,5Z)-2-carboxy-4-methylthiazol-5(2H)-ylidene]ethyl phosphate + 2 H2O + H(+). It functions in the pathway cofactor biosynthesis; thiamine diphosphate biosynthesis. Functionally, catalyzes the rearrangement of 1-deoxy-D-xylulose 5-phosphate (DXP) to produce the thiazole phosphate moiety of thiamine. Sulfur is provided by the thiocarboxylate moiety of the carrier protein ThiS. In vitro, sulfur can be provided by H(2)S. The polypeptide is Thiazole synthase (Nitrosococcus oceani (strain ATCC 19707 / BCRC 17464 / JCM 30415 / NCIMB 11848 / C-107)).